The primary structure comprises 159 residues: Urease accessory protein UreE (159 aa).

The segment at 140 to 159 (GAYHGTGHHHHGHGHDPHHG) is disordered.

The protein belongs to the UreE family.

Its subcellular location is the cytoplasm. Functionally, involved in urease metallocenter assembly. Binds nickel. Probably functions as a nickel donor during metallocenter assembly. This is Urease accessory protein UreE from Sinorhizobium fredii (strain NBRC 101917 / NGR234).